Here is a 453-residue protein sequence, read N- to C-terminus: UDP-glycosyltransferase 76E9 (453 aa).

UDP-alpha-D-glucose is bound by residues S279, 337-339 (APQ), 354-362 (HCGWNSTLE), and 376-379 (TTDQ).

This sequence belongs to the UDP-glycosyltransferase family.

This Arabidopsis thaliana (Mouse-ear cress) protein is UDP-glycosyltransferase 76E9 (UGT76E9).